The chain runs to 485 residues: Glutamate--tRNA ligase (485 aa).

The short motif at 12 to 22 is the 'HIGH' region element; sequence PSPTGEPHVGT. The 'KMSKS' region signature appears at 253–257; that stretch reads KLSKR. Lysine 256 is a binding site for ATP.

This sequence belongs to the class-I aminoacyl-tRNA synthetase family. Glutamate--tRNA ligase type 1 subfamily. Monomer.

Its subcellular location is the cytoplasm. It carries out the reaction tRNA(Glu) + L-glutamate + ATP = L-glutamyl-tRNA(Glu) + AMP + diphosphate. Catalyzes the attachment of glutamate to tRNA(Glu) in a two-step reaction: glutamate is first activated by ATP to form Glu-AMP and then transferred to the acceptor end of tRNA(Glu). The sequence is that of Glutamate--tRNA ligase from Rhizobium meliloti (strain 1021) (Ensifer meliloti).